Reading from the N-terminus, the 282-residue chain is B3 domain-containing protein At5g06250 (282 aa).

Positions 46 to 159 (FEKSLTPSDV…RLFIGWRRRG (114 aa)) form a DNA-binding region, TF-B3.

The protein resides in the nucleus. The protein is B3 domain-containing protein At5g06250 of Arabidopsis thaliana (Mouse-ear cress).